The following is a 229-amino-acid chain: Putative germin-like protein 3-4 (229 aa).

An N-terminal signal peptide occupies residues 1–31 (MEHSFKTITAGVVFVVLLLQQAPVLIRATDA). An intrachain disulfide couples Cys38 to Cys53. The Cupin type-1 domain maps to 67–219 (SKIATGGDVN…ALRVDTGVVE (153 aa)). N-linked (GlcNAc...) asparagine glycans are attached at residues Asn80 and Asn83. Residues His116, His118, Glu123, and His165 each coordinate Mn(2+).

The protein belongs to the germin family. Oligomer (believed to be a pentamer but probably hexamer).

The protein localises to the secreted. The protein resides in the extracellular space. It localises to the apoplast. In terms of biological role, may play a role in plant defense. Probably has no oxalate oxidase activity even if the active site is conserved. This chain is Putative germin-like protein 3-4, found in Oryza sativa subsp. japonica (Rice).